The sequence spans 635 residues: Allantoin permease (635 aa).

Residues 1–144 are Cytoplasmic-facing; sequence MANDALSAIF…AGTGLQLGLN (144 aa). A helical membrane pass occupies residues 145–165; the sequence is WWQCWLTVWIGYTFAGIFVVL. The Extracellular portion of the chain corresponds to 166–174; it reads NSRFGSAYH. Residues 175–195 form a helical membrane-spanning segment; it reads LSFPITVRASFGIFFSMWPII. The Cytoplasmic segment spans residues 196–198; that stretch reads NRV. The helical transmembrane segment at 199 to 219 threads the bilayer; sequence VMAIVWYAVQAWLGATPVALM. The Extracellular segment spans residues 220–243; sequence LKSIFGKNLEDRIPNHFGSPNSTT. The helical transmembrane segment at 244 to 264 threads the bilayer; that stretch reads FEFMCFFIFWVVSIPFVLVAP. Over 265-269 the chain is Cytoplasmic; the sequence is HKIRH. Residues 270-290 form a helical membrane-spanning segment; sequence LFTVKAALIPFAAFGFLIWAL. Residues 291-311 are Extracellular-facing; the sequence is KKSHGKIELGTLNDYSPHGSE. A helical transmembrane segment spans residues 312–332; sequence FSWIFVRSLMACVANFAALII. At 333-351 the chain is on the cytoplasmic side; that stretch reads NAPDFGRFAKNPQASLWPQ. The chain crosses the membrane as a helical span at residues 352 to 372; the sequence is LVAIPLFFAITCLIGIIVTAA. Residues 373–401 are Extracellular-facing; sequence GYHLYGVNYWSPLDVLGQFLETTYTRGTR. A helical transmembrane segment spans residues 402 to 422; sequence AGVFLISFVFALAQLGTNISA. At 423–443 the chain is on the cytoplasmic side; it reads NSLACGADMTALFPRYINIRR. Residues 444–464 traverse the membrane as a helical segment; that stretch reads GSLFCVAMALCICPWNLMASS. Topologically, residues 465-466 are extracellular; the sequence is SK. A helical transmembrane segment spans residues 467–487; it reads FTSALGAYAIFLSSIAGVICA. At 488–522 the chain is on the cytoplasmic side; sequence DYFVVRRGYVKLTHLFLAQKGSFYMFGNKFGANWR. Residues 523–543 form a helical membrane-spanning segment; sequence AFVAYICGIAPNLPGFIGDVG. The Extracellular portion of the chain corresponds to 544–560; that stretch reads APKITVSEGAMRLYYLG. Residues 561-581 traverse the membrane as a helical segment; sequence YPVGFFISAVIYLILCYFFPV. Over 582–635 the chain is Cytoplasmic; that stretch reads PGTPVTNFLTEKGWFQRWAYVEDFEQDWKNELRRDDLCDDTVSIYDGTEEKIVY.

It belongs to the purine-cytosine permease (2.A.39) family.

The protein localises to the membrane. Transport of allantoin. The protein is Allantoin permease (DAL4) of Saccharomyces cerevisiae (strain ATCC 204508 / S288c) (Baker's yeast).